Here is a 1030-residue protein sequence, read N- to C-terminus: Arrestin domain-containing protein F (1030 aa).

Disordered regions lie at residues 1–27 (MEII…GSKR) and 119–154 (ENKN…NNPL). Positions 128 to 137 (NFDDGEEDDT) are enriched in acidic residues. A compositionally biased stretch (low complexity) spans 142 to 152 (NINNKNNNNNN). 2 coiled-coil regions span residues 320-374 (HQLE…HNNN) and 544-577 (QKLN…IRDQ). 2 disordered regions span residues 539-572 (SPQS…NSES) and 885-931 (NNEK…NNNN). Basic and acidic residues predominate over residues 547–562 (NKKDKEKEKEKEKEND). The segment covering 910-931 (SPSSSSFLSNSSNTSSSKNNNN) has biased composition (low complexity).

This sequence belongs to the arrestin family.

The protein is Arrestin domain-containing protein F (adcF) of Dictyostelium discoideum (Social amoeba).